We begin with the raw amino-acid sequence, 189 residues long: Heme-binding protein 1 (189 aa).

Belongs to the HEBP family. In terms of assembly, monomer.

It localises to the cytoplasm. In terms of biological role, may bind free porphyrinogens that may be present in the cell and thus facilitate removal of these potentially toxic compound. Binds with a high affinity to one molecule of heme or porphyrins. It binds metalloporphyrins, free porphyrins and N-methylprotoporphyrin with similar affinities. The protein is Heme-binding protein 1 (HEBP1) of Sus scrofa (Pig).